Here is a 212-residue protein sequence, read N- to C-terminus: MPLNEIIGVIGNLISKGYIQKQSVIDALMSVPRHKFIPKAMEEYAYIDSPLGIGCGQTISAIHMVGIMCEELDLDVGQNVLEVGTGSGYHAAVVSEIVGESGKVTTIERIPELFEKSKQVLSELGYENVEVVLGDGTKGYLENAPYDRIYVTASGPNVPIALFEQLNDGGIILAPVGSHFQTLMRYKKINGKIFKEKLLEVAFVPLIGENGF.

Ser-60 is an active-site residue.

Belongs to the methyltransferase superfamily. L-isoaspartyl/D-aspartyl protein methyltransferase family.

The protein resides in the cytoplasm. The catalysed reaction is [protein]-L-isoaspartate + S-adenosyl-L-methionine = [protein]-L-isoaspartate alpha-methyl ester + S-adenosyl-L-homocysteine. In terms of biological role, catalyzes the methyl esterification of L-isoaspartyl residues in peptides and proteins that result from spontaneous decomposition of normal L-aspartyl and L-asparaginyl residues. It plays a role in the repair and/or degradation of damaged proteins. In Methanococcus maripaludis (strain C5 / ATCC BAA-1333), this protein is Protein-L-isoaspartate O-methyltransferase.